Consider the following 968-residue polypeptide: Polycystin-2 (968 aa).

Polar residues predominate over residues 1-11; the sequence is MVNSSRVQPQQ. Disordered stretches follow at residues 1–28 and 58–181; these read MVNSSRVQPQQPGDAKRPPAPRAPDPGR and RIRQ…LPLE. The Cytoplasmic portion of the chain corresponds to 1–219; the sequence is MVNSSRVQPQ…STNREKYLKS (219 aa). Over residues 62 to 83 the composition is skewed to low complexity; that stretch reads AAARDPPAGAAASPSPPLSSCS. Phosphoserine occurs at positions 76 and 80. Residues 95–107 show a composition bias toward acidic residues; it reads EAEEEEEEVEGEE. Low complexity predominate over residues 123–139; the sequence is RRSAASSAVSSVGARSR. R137 is subject to Omega-N-methylarginine. The helical transmembrane segment at 220–241 threads the bilayer; the sequence is VLRELVTYLLFLIVLCILTYGM. Over 242–468 the chain is Extracellular; sequence MSSNVYYYTR…PLKLIRYVTT (227 aa). N-linked (GlcNAc...) asparagine glycans are attached at residues N299 and N305. An N-linked (GlcNAc...) (complex) asparagine glycan is attached at N328. The cysteines at positions 331 and 344 are disulfide-linked. Residues N362 and N375 are each glycosylated (N-linked (GlcNAc...) asparagine). A helical membrane pass occupies residues 469–489; it reads FDFFLAACEIIFCFFIFYYVV. Residues 490–505 are Cytoplasmic-facing; the sequence is EEILEIRIHKLHYFRS. The chain crosses the membrane as a helical span at residues 506–526; that stretch reads FWNCLDVVIVVLSVVAIGINI. At 527 to 552 the chain is on the extracellular side; that stretch reads YRTSNVEVLLQFLEDQNTFPNFEHLA. A helical transmembrane segment spans residues 553-573; it reads YWQIQFNNIAAVTVFFVWIKL. Q557 contacts cholesterol. The Cytoplasmic portion of the chain corresponds to 574–597; it reads FKFINFNRTMSQLSTTMSRCAKDL. Residues 598-619 traverse the membrane as a helical segment; sequence FGFAIMFFIIFLAYAQLAYLVF. Residues 620 to 631 lie on the Extracellular side of the membrane; sequence GTQVDDFSTFQE. The segment at residues 632-646 is an intramembrane region (pore-forming); it reads CIFTQFRIILGDINF. Residue L641 coordinates Ca(2+). A Selectivity filter motif is present at residues 641-643; the sequence is LGD. At 647-654 the chain is on the extracellular side; it reads AEIEEANR. The helical transmembrane segment at 655 to 675 threads the bilayer; it reads VLGPIYFTTFVFFMFFILLNM. Over 676 to 968 the chain is Cytoplasmic; that stretch reads FLAIINDTYS…GGNGSSNVHV (293 aa). The 36-residue stretch at 750–785 folds into the EF-hand domain; the sequence is HTDAEIEAIFTKYDQDGDQELTEHEHQQMRDDLEKE. D763, D765, D767, E769, and E774 together coordinate Ca(2+). The interval 764–831 is disordered; it reads QDGDQELTEH…HSSRRRGSIS (68 aa). The span at 770–795 shows a compositional bias: basic and acidic residues; sequence LTEHEHQQMRDDLEKEREDLDLDHSS. Low complexity predominate over residues 796 to 807; it reads LPRPMSSRSFPR. Residues S801, S808, S812, and S829 each carry the phosphoserine modification. The linker stretch occupies residues 803 to 822; the sequence is RSFPRSLDDSEEDDDEDSGH. The segment at 810 to 821 is important for interaction with PACS1 and PACS2; it reads DDSEEDDDEDSG. Residues 833-872 adopt a coiled-coil conformation; the sequence is GVSYEEFQVLVRRVDRMEHSIGSIVSKIDAVIVKLEIMER. A disordered region spans residues 917 to 968; it reads ESDDAASQISHGLGTPVGLNGQPRPRSSRPSSSQSTEGMEGAGGNGSSNVHV. Low complexity predominate over residues 938–951; sequence QPRPRSSRPSSSQS.

It belongs to the polycystin family. In terms of assembly, homotetramer. Component of the heterotetrameric polycystin channel complex with PKD1; the tetramer contains one PKD1 chain and three PKD2 chains. Isoform 1 interacts with PKD1 while isoform 3 does not. Interacts with PKD1L1; probably forms a Ca(2+) channel. Interacts with CD2AP. Interacts with HAX1. Interacts with NEK8. Part of a complex containing AKAP5, ADCY5, ADCY6 and PDE4C. Interacts (via C-terminus) with TRPV4 (via C-terminus). Interacts (via C-terminal acidic region) with PACS1 and PACS2; these interactions retain the protein in the endoplasmic reticulum and prevent trafficking to the cell membrane. Interacts with TMEM33. Form a heterotetramer with TRPC1 with a 2:2 stoichiometry; has distinct channel properties separate from PKD2 or TRPC1 homomers alone. Interacts with TMEM120A; TMEM120A inhibits PKD2 channel activity through the physical association of PKD2 with TMEM120A. Interacts (via N-terminus) with RYR2; regulates RYR2 channel activity. In terms of processing, phosphorylated. Phosphorylation is important for protein function; a mutant that lacks the N-terminal phosphorylation sites cannot complement a zebrafish pkd2-deficient mutant. PKD-mediated phosphorylation at the C-terminus regulates its function in the release of Ca(2+) stores from the endoplasmic reticulum. Phosphorylation at Ser-812 regulates PKD2 trafficking. Phosphorylation at Ser-76 is required for PKD2 trafficking to or retention at the lateral plasma membrane. Phosphorylation at Ser-801, Ser-812 and Ser-829 regulates PKD2 channel activity. N-glycosylated. The four subunits in a tetramer probably differ in the extent of glycosylation; simultaneous glycosylation of all experimentally validated sites would probably create steric hindrance. Thus, glycosylation at Asn-305 is not compatible with glycosylation at Asn-328; only one of these two residues is glycosylated at a given time. Post-translationally, sumoylated by SUMO1; sumoylation regulates PKD2 membrane recycling and is necessary for intravascular pressure-induced arterial contractility. Detected in fetal and adult kidney. Detected at the thick ascending limb of the loop of Henle, at distal tubules, including the distal convoluted tubule and cortical collecting tubules, with weak staining of the collecting duct. Detected on placenta syncytiotrophoblasts (at protein level). Strongly expressed in ovary, fetal and adult kidney, testis, and small intestine. Not detected in peripheral leukocytes.

It is found in the cell projection. Its subcellular location is the cilium membrane. It localises to the endoplasmic reticulum membrane. The protein resides in the cell membrane. The protein localises to the basolateral cell membrane. It is found in the cytoplasmic vesicle membrane. Its subcellular location is the golgi apparatus. It localises to the vesicle. The protein resides in the secreted. The protein localises to the extracellular exosome. It carries out the reaction K(+)(in) = K(+)(out). It catalyses the reaction Na(+)(in) = Na(+)(out). The enzyme catalyses Ca(2+)(in) = Ca(2+)(out). Its activity is regulated as follows. Channel activity is regulated by phosphorylation. Channel activity is regulated by intracellular Ca(2+). At the endoplasmic reticulum membrane (ER), TMEM33 enhances its channel activity. TMEM120A inhibits the channel activity of PKD2, and mediates mechanosensitivity of the PKD2-TMEM120A channel complex. PKD1/PKD2 complex on the plasma membrane is activated by PKD1 N-terminus. Functionally, forms a nonselective cation channel. Can function as a homotetrameric ion channel or can form heteromer with PKD1. Displays distinct function depending on its subcellular localization and regulation by its binding partners. In primary cilium functions as a cation channel, with a preference for monovalent cations over divalent cations that allows K(+), Na(+) and Ca(2+) influx, with low selectivity for Ca(2+). Involved in fluid-flow mechanosensation by the primary cilium in renal epithelium. In the endoplasmic reticulum, likely functions as a K(+) channel to facilitate Ca(2+) release. The heterotetrameric PKD1/PKD2 channel has higher Ca(2+) permeability than homomeric PKD2 channel and acts as a primarily Ca(2+)-permeable channel. Interacts with and acts as a regulator of a number of other channels, such as TRPV4, TRPC1, IP3R, RYR2, ultimately further affecting intracellular signaling, to modulate intracellular Ca(2+) signaling. Together with TRPV4, forms mechano- and thermosensitive channels in cilium. In cardiomyocytes, PKD2 modulates Ca(2+) release from stimulated RYR2 receptors through direct association. Also involved in left-right axis specification via its role in sensing nodal flow; forms a complex with PKD1L1 in cilia to facilitate flow detection in left-right patterning. Acts as a regulator of cilium length together with PKD1. Mediates systemic blood pressure and contributes to the myogenic response in cerebral arteries though vasoconstriction. The chain is Polycystin-2 from Homo sapiens (Human).